A 529-amino-acid polypeptide reads, in one-letter code: Delayed-rectifier potassium channel regulatory subunit KCNS1 (529 aa).

The Cytoplasmic portion of the chain corresponds to 1-217; that stretch reads MLMLLVRGTR…LTMENPGYSL (217 aa). Residues 218–239 traverse the membrane as a helical segment; sequence PSKLFSCVSISVVLASIAAMCI. Over 240-270 the chain is Extracellular; sequence HSLPEYQAREAAAAVAAVAAGRSAEGVRDDP. Residues 271-293 traverse the membrane as a helical segment; the sequence is VLRRLEYFCIAWFSFEVSSRLLL. The Cytoplasmic segment spans residues 294 to 304; sequence APSTRNFFCHP. A helical membrane pass occupies residues 305 to 322; that stretch reads LNLIDIVSVLPFYLTLLA. The Extracellular segment spans residues 323–340; sequence GAALGDHGGTGGKEFGHL. A helical; Voltage-sensor transmembrane segment spans residues 341–361; the sequence is GKVVQVFRLMRIFRVLKLARH. Over 362 to 376 the chain is Cytoplasmic; it reads STGLRSLGATLKHSY. The helical transmembrane segment at 377–398 threads the bilayer; sequence REVGILLLYLAVGVSVFSGVAY. The Extracellular portion of the chain corresponds to 399-411; it reads TAEKEEHVGFDTI. The segment at residues 412–423 is an intramembrane region (helical); that stretch reads PACWWWGTVSMT. A Selectivity filter motif is present at residues 424-429; the sequence is TVGYGD. The stretch at 424 to 431 is an intramembrane region; it reads TVGYGDVV. Topologically, residues 432–438 are extracellular; the sequence is PVTVAGK. Residues 439–467 form a helical membrane-spanning segment; that stretch reads LAASGCILGGILVVALPITIIFNKFSHFY. The Cytoplasmic segment spans residues 468 to 529; that stretch reads RRQKALEAAV…PSEPPHSQMY (62 aa). Positions 494–529 are disordered; that stretch reads GVSEASLETSRETSQEGRSADLETQVPSEPPHSQMY. Residues 502–514 show a composition bias toward basic and acidic residues; it reads TSRETSQEGRSAD.

The protein belongs to the potassium channel family. S (TC 1.A.1.2) subfamily. Kv9.1/KCNS1 sub-subfamily. In terms of assembly, heterotetramer with KCNB1. Heterotetramer with KCNB2. Does not form homomultimers.

It localises to the cell membrane. Functionally, potassium channel regulatory subunit that modulate the delayed rectifier voltage-gated potassium channel activity of KCNB1 and KCNB2 by altering their kinetics, expression levels, and shifting the half-inactivation potential to more polarized values. While it does not form functional channels on its own, it can form functional heterotetrameric channels with KCNB1 and KCNB2. Each regulatory subunit has unique regulatory properties that can lead to extensive inhibition, significant changes in kinetics, and/or substantial shifts in the voltage dependencies of the inactivation process. This Aotus nancymaae (Ma's night monkey) protein is Delayed-rectifier potassium channel regulatory subunit KCNS1.